A 370-amino-acid polypeptide reads, in one-letter code: Death-associated protein kinase 2 (370 aa).

Residues 23–285 enclose the Protein kinase domain; that stretch reads YDIGEELGSG…IQEALRHPWI (263 aa). ATP contacts are provided by residues 29 to 37 and K52; that span reads LGSGQFAIV. D149 acts as the Proton acceptor in catalysis. A calmodulin-binding region spans residues 287–354; the sequence is PVDTQQAMVR…RNCESDTEEN (68 aa). An autoinhibitory domain region spans residues 292–301; sequence QAMVRRESVV. Position 299 is a phosphoserine (S299). Position 318 is a phosphoserine; by autocatalysis (S318). The residue at position 349 (S349) is a Phosphoserine. T369 bears the Phosphothreonine mark.

The protein belongs to the protein kinase superfamily. CAMK Ser/Thr protein kinase family. DAP kinase subfamily. Homodimer in its autoinhibited state. Active as monomer. Interacts with 14-3-3 proteins YWHAB, YWHAE, YWHAG, YWHAH, YWHAQ, YWHAZ and SFN; the interaction requires DAPK2 phosphorylation at Thr-369 and suppresses DAPK2 kinase activity and DAPK2-induced apoptosis. Mg(2+) serves as cofactor. In terms of processing, autophosphorylation at Ser-318 inhibits its catalytic activity. Dephosphorylated at Ser-318 in response to activated Fas and TNF-alpha receptors. In terms of tissue distribution, expressed in peritubular interstitial cells of the renal cortex. Isoform 1 is found in the adult brain while isoform 2 is expressed in brains of embryos and young mice (at protein level).

Its subcellular location is the cytoplasm. It localises to the cytoplasmic vesicle. It is found in the autophagosome lumen. It carries out the reaction L-seryl-[protein] + ATP = O-phospho-L-seryl-[protein] + ADP + H(+). The enzyme catalyses L-threonyl-[protein] + ATP = O-phospho-L-threonyl-[protein] + ADP + H(+). Its activity is regulated as follows. Activated by Ca(2+)/calmodulin. Regulated by a double locking mechanism, involving autophosphorylation at Ser-318, calmodulin binding, and dimerization. In the inactive state, Ser-318 is phosphorylated, and the kinase is dimeric. Activation involves: dephosphorylation at Ser-318, release-of-autoinhibition mechanism where calmodulin binding induces a conformational change that relieves the steric block of the active site by the autoinhibitory domain, and generation of the monomeric active form of the kinase. Its function is as follows. Calcium/calmodulin-dependent serine/threonine kinase involved in multiple cellular signaling pathways that trigger cell survival, apoptosis, and autophagy. Capable of regulating both type I apoptotic and type II autophagic cell death signals. The former involves caspase activation, chromatin and mitochondrial condensation while the latter involves caspase-independent cell death in conjunction with accumulation of mature autophagic vesicles, plasma membrane blebs, and nuclear condensation without DNA degradation. Mediator of anoikis and a suppressor of beta-catenin-dependent anchorage-independent growth of malignant epithelial cells. May play a role in granulocytic maturation. Regulates granulocytes motility by controlling cell spreading and polarization. The polypeptide is Death-associated protein kinase 2 (Dapk2) (Mus musculus (Mouse)).